Reading from the N-terminus, the 241-residue chain is Copper transport protein CTR3 (241 aa).

Residues 1–41 (MNMGGSSSTAAKKATCKISMLWNWYTIDTCFIARSWRNDTK) lie on the Lumenal side of the membrane. A helical membrane pass occupies residues 42-62 (GKFAGSCIGCFALVVVAQWLT). At 63-159 (RFSRQFDVEL…SCCTLITPVD (97 aa)) the chain is on the cytoplasmic side. The chain crosses the membrane as a helical span at residues 160 to 180 (LYPTFLDHMIRVTIFVLQWGL). Residues 181 to 182 (SY) are Lumenal-facing. A helical membrane pass occupies residues 183-203 (IIMLLFMYYNGYIIISCLIGA). Residues 204–241 (IVGRFIFCYEPLGSLGANGSAQGTVSYDKESDDRKCCL) lie on the Cytoplasmic side of the membrane.

The protein belongs to the copper transporter (Ctr) (TC 1.A.56) family. SLC31A subfamily.

It localises to the cytoplasmic vesicle membrane. In terms of biological role, required for high affinity copper (probably reduced Cu I) transport into the cell. The polypeptide is Copper transport protein CTR3 (CTR3) (Saccharomyces cerevisiae (strain ATCC 204508 / S288c) (Baker's yeast)).